The primary structure comprises 77 residues: uncharacterized protein (77 aa).

This is an uncharacterized protein from Bos taurus (Bovine).